The sequence spans 415 residues: Zinc finger protein ZFMSA12A (415 aa).

The disordered stretch occupies residues 1 to 36 (MGIQDARWPSEDEETHLLDSSSAEQTRGEKCSDSTP). 12 C2H2-type zinc fingers span residues 78–100 (HKCT…QRLH), 106–129 (YRCS…RTQC), 134–156 (YICI…QCVH), 161–183 (FDCS…ELTH), 189–211 (FTCR…QKIH), 217–239 (NQCM…EVRH), 245–267 (QICA…MRSH), 273–295 (FQCT…VRTH), 301–323 (YLCS…RRTH), 329–351 (YKCS…MRVH), 357–379 (YVCS…SMNH), and 385–407 (YACQ…LKTH).

It localises to the nucleus. The polypeptide is Zinc finger protein ZFMSA12A (Micropterus salmoides (Largemouth bass)).